Consider the following 592-residue polypeptide: MAPPVKGKRKQSEEGEPLDPPVSPQPDGEPRSRSPVRLEEPPEAGREREEEQEEEQAFLVSLYKFMKERHTPIERVPHLGFKQINLWKIYKAVEKLGAYELVTGRRLWKNVYDELGGSPGSTSAATCTRRHYERLVLPYVRHLKGEDDKPLPPSKPRKQYKMAKEPRGDDGATERPKKVKEEKRVDQLMPAKTKTDAPDPARLPSQETPRDGMEQRGPAAGPSLPFLGASGCPEAYKRLLSSFYCRGTHGIMSPLAKKKLLAQVSKAEALQCQEEGCRHGAGGEPQAPPAAPPLESPQSPGGPAEDSRHRLTPLEGRQAPGGGLWGETQAGPRPSAPVVTGCFHAYPSEVLKPISQRPRDLFPSLKDRVLLGPPAKEEGLPAKEPPLVWGGDAGRPSAFHKGSSRKGSLYPKPKACWVSPMTKVPAESPVPLPTFPSSPGLGHKRSLAEDSSVHGSKKLRAVSPFLKEANAQECGTKPRGPDLAVSCLLGPALPEAYRGTLLRCPLNFAGTLGPLKGQATLPFSPLVIPAFPAHLLATTAPSPMTAGLMHLPPASFDSALCHRLCPASSPWHVPPATAYTAPHFSFHLNTKL.

Residues 1-53 (MAPPVKGKRKQSEEGEPLDPPVSPQPDGEPRSRSPVRLEEPPEAGREREEEQE) are disordered. The interaction with SOX9 stretch occupies residues 1-299 (MAPPVKGKRK…AAPPLESPQS (299 aa)). Serine 23 carries the phosphoserine modification. The span at 28-49 (GEPRSRSPVRLEEPPEAGRERE) shows a compositional bias: basic and acidic residues. Positions 52–144 (QEEEQAFLVS…LVLPYVRHLK (93 aa)) constitute an ARID domain. Residues lysine 82 and lysine 91 each participate in a glycyl lysine isopeptide (Lys-Gly) (interchain with G-Cter in ubiquitin) cross-link. A disordered region spans residues 143–225 (LKGEDDKPLP…RGPAAGPSLP (83 aa)). Residues 162–186 (MAKEPRGDDGATERPKKVKEEKRVD) are compositionally biased toward basic and acidic residues. A Phosphoserine modification is found at serine 253. Residues 277–333 (CRHGAGGEPQAPPAAPPLESPQSPGGPAEDSRHRLTPLEGRQAPGGGLWGETQAGPR) form a disordered region. Residues 286–295 (QAPPAAPPLE) are compositionally biased toward pro residues. A phosphoserine mark is found at serine 438 and serine 463.

In terms of assembly, interacts with SOX9. Interacts with ESR1. Interacts with RORC. In terms of processing, phosphorylated by MAPK14 on serine residues involving a TLR4 signaling pathway upon lipopolysaccharide (LPS) stimulation leading to its ubiquitination and proteasomal degradation. Ubiquitinated leading to proteasomal degradation; involving WWP1 linked to MAPK14-mediated phosphorylation upon LPS stimulation.

It localises to the nucleus. Its function is as follows. DNA-binding protein that may regulate transcription and act as a repressor by binding to AT-rich stretches in the promoter region of target genes. May act as repressor and down-regulate enhancer-dependent gene expressison. May positively regulate chondrocyte-specific transcription such as of COL2A1 in collaboration with SOX9 and positively regulate histone H3 acetylation at chondrocyte-specific genes. May stimulate early-stage chondrocyte differentiation and inhibit later stage differention. Can repress ESR1-mediated transcriptional activation; proposed to act as corepressor for selective nuclear hormone receptors. As an RNA-binding protein, involved in the regulation of inflammatory response by stabilizing selective inflammation-related mRNAs, such as STAT3 and TBX21. Also stabilizes IL6 mRNA. Binds to stem loop structures located in the 3'UTRs of IL6, STAT3 and TBX21 mRNAs; at least for STAT3 prevents binding of ZC3H12A to the mRNA stem loop structure thus inhibiting its degradation activity. Contributes to elevated IL6 levels possibly implicated in autoimmunity processes. IL6-dependent stabilization of STAT3 mRNA may promote differentiation of naive CD4+ T-cells into T-helper Th17 cells. In CD4+ T-cells may also inhibit RORC-induced Th17 cell differentiation independently of IL6 signaling. Stabilization of TBX21 mRNA contributes to elevated interferon-gamma secretion in Th1 cells possibly implicated in the establishment of septic shock. Stabilizes TNFRSF4/OX40 mRNA by binding to the conserved stem loop structure in its 3'UTR; thereby competing with the mRNA-destabilizing functions of RC3H1 and endoribonuclease ZC3H12A. In Bos taurus (Bovine), this protein is AT-rich interactive domain-containing protein 5A (ARID5A).